We begin with the raw amino-acid sequence, 571 residues long: Adenine deaminase (571 aa).

This sequence belongs to the metallo-dependent hydrolases superfamily. Adenine deaminase family. Mn(2+) is required as a cofactor.

It carries out the reaction adenine + H2O + H(+) = hypoxanthine + NH4(+). In Dehalococcoides mccartyi (strain ATCC BAA-2266 / KCTC 15142 / 195) (Dehalococcoides ethenogenes (strain 195)), this protein is Adenine deaminase.